The primary structure comprises 415 residues: Histidine--tRNA ligase (415 aa).

The protein belongs to the class-II aminoacyl-tRNA synthetase family. Homodimer.

The protein resides in the cytoplasm. The catalysed reaction is tRNA(His) + L-histidine + ATP = L-histidyl-tRNA(His) + AMP + diphosphate + H(+). In Clostridium botulinum (strain ATCC 19397 / Type A), this protein is Histidine--tRNA ligase.